The sequence spans 353 residues: Photosystem II D2 protein (353 aa).

The residue at position 2 (Thr-2) is an N-acetylthreonine. Phosphothreonine is present on Thr-2. Residues 41 to 61 (CAYFAVGGWFTGTTFVTSWYT) traverse the membrane as a helical segment. A chlorophyll a-binding site is contributed by His-118. Residues 125–141 (GFMLRQFELARSVQLRP) traverse the membrane as a helical segment. Pheophytin a contacts are provided by Gln-130 and Asn-143. The chain crosses the membrane as a helical span at residues 153 to 166 (VFVSVFLIYPLGQS). His-198 serves as a coordination point for chlorophyll a. Residues 208–228 (AALLCAIHGATVENTLFEDGD) traverse the membrane as a helical segment. His-215 and Phe-262 together coordinate a plastoquinone. His-215 is a binding site for Fe cation. His-269 provides a ligand contact to Fe cation. Residues 279–295 (GLWMSALGVVGLALNLR) traverse the membrane as a helical segment.

It belongs to the reaction center PufL/M/PsbA/D family. PSII is composed of 1 copy each of membrane proteins PsbA, PsbB, PsbC, PsbD, PsbE, PsbF, PsbH, PsbI, PsbJ, PsbK, PsbL, PsbM, PsbT, PsbX, PsbY, PsbZ, Psb30/Ycf12, at least 3 peripheral proteins of the oxygen-evolving complex and a large number of cofactors. It forms dimeric complexes. The D1/D2 heterodimer binds P680, chlorophylls that are the primary electron donor of PSII, and subsequent electron acceptors. It shares a non-heme iron and each subunit binds pheophytin, quinone, additional chlorophylls, carotenoids and lipids. There is also a Cl(-1) ion associated with D1 and D2, which is required for oxygen evolution. The PSII complex binds additional chlorophylls, carotenoids and specific lipids. serves as cofactor.

It is found in the plastid. It localises to the chloroplast thylakoid membrane. It carries out the reaction 2 a plastoquinone + 4 hnu + 2 H2O = 2 a plastoquinol + O2. Functionally, photosystem II (PSII) is a light-driven water:plastoquinone oxidoreductase that uses light energy to abstract electrons from H(2)O, generating O(2) and a proton gradient subsequently used for ATP formation. It consists of a core antenna complex that captures photons, and an electron transfer chain that converts photonic excitation into a charge separation. The D1/D2 (PsbA/PsbD) reaction center heterodimer binds P680, the primary electron donor of PSII as well as several subsequent electron acceptors. D2 is needed for assembly of a stable PSII complex. This Nicotiana tabacum (Common tobacco) protein is Photosystem II D2 protein.